The primary structure comprises 488 residues: Glutamyl-tRNA(Gln) amidotransferase subunit A (488 aa).

Residues Lys77 and Ser152 each act as charge relay system in the active site. The active-site Acyl-ester intermediate is Ser176.

This sequence belongs to the amidase family. GatA subfamily. Heterotrimer of A, B and C subunits.

The enzyme catalyses L-glutamyl-tRNA(Gln) + L-glutamine + ATP + H2O = L-glutaminyl-tRNA(Gln) + L-glutamate + ADP + phosphate + H(+). In terms of biological role, allows the formation of correctly charged Gln-tRNA(Gln) through the transamidation of misacylated Glu-tRNA(Gln) in organisms which lack glutaminyl-tRNA synthetase. The reaction takes place in the presence of glutamine and ATP through an activated gamma-phospho-Glu-tRNA(Gln). The protein is Glutamyl-tRNA(Gln) amidotransferase subunit A of Streptococcus suis (strain 05ZYH33).